The following is a 415-amino-acid chain: Multidrug resistance protein MdtA (415 aa).

The N-terminal stretch at 1–21 is a signal peptide; it reads MKGSYKSRWVIVIVVVIAAIA. Disordered regions lie at residues 32 to 60 and 392 to 415; these read SRSAAPGATKQAQQSPAGGRRGMRSGPLA and EAQSATTPEEKATSREYAKKGARS. The segment covering 399-415 has biased composition (basic and acidic residues); that stretch reads PEEKATSREYAKKGARS.

It belongs to the membrane fusion protein (MFP) (TC 8.A.1) family. Part of a tripartite efflux system composed of MdtA, MdtB and MdtC.

The protein resides in the cell inner membrane. In terms of biological role, the MdtABC tripartite complex confers resistance against novobiocin and deoxycholate. The polypeptide is Multidrug resistance protein MdtA (Escherichia coli (strain K12 / MC4100 / BW2952)).